We begin with the raw amino-acid sequence, 205 residues long: Guanylate kinase (205 aa).

The 179-residue stretch at 17-195 (SRLLVLSGPS…AVEAVERLLF (179 aa)) folds into the Guanylate kinase-like domain. 24-31 (GPSGVGKD) is an ATP binding site.

This sequence belongs to the guanylate kinase family.

The protein localises to the cytoplasm. The enzyme catalyses GMP + ATP = GDP + ADP. Functionally, essential for recycling GMP and indirectly, cGMP. The sequence is that of Guanylate kinase from Gloeobacter violaceus (strain ATCC 29082 / PCC 7421).